The following is a 253-amino-acid chain: Phycoerythrobilin:ferredoxin oxidoreductase (253 aa).

This sequence belongs to the HY2 family.

The catalysed reaction is (3Z)-phycoerythrobilin + oxidized 2[4Fe-4S]-[ferredoxin] = 15,16-dihydrobiliverdin + reduced 2[4Fe-4S]-[ferredoxin] + 2 H(+). Its function is as follows. Catalyzes the two-electron reduction of the C2 and C3(1) diene system of 15,16-dihydrobiliverdin. In Prochlorococcus marinus (strain MIT 9312), this protein is Phycoerythrobilin:ferredoxin oxidoreductase.